A 337-amino-acid polypeptide reads, in one-letter code: 4-hydroxy-3-methylbut-2-enyl diphosphate reductase (337 aa).

Position 25 (C25) interacts with [4Fe-4S] cluster. Residues H54 and H87 each contribute to the (2E)-4-hydroxy-3-methylbut-2-enyl diphosphate site. Dimethylallyl diphosphate contacts are provided by H54 and H87. Isopentenyl diphosphate-binding residues include H54 and H87. C109 contacts [4Fe-4S] cluster. H137 contributes to the (2E)-4-hydroxy-3-methylbut-2-enyl diphosphate binding site. H137 is a binding site for dimethylallyl diphosphate. H137 contributes to the isopentenyl diphosphate binding site. E139 acts as the Proton donor in catalysis. T177 is a binding site for (2E)-4-hydroxy-3-methylbut-2-enyl diphosphate. C207 lines the [4Fe-4S] cluster pocket. (2E)-4-hydroxy-3-methylbut-2-enyl diphosphate contacts are provided by S235, S236, N237, and S280. Dimethylallyl diphosphate contacts are provided by S235, S236, N237, and S280. S235, S236, N237, and S280 together coordinate isopentenyl diphosphate.

Belongs to the IspH family. [4Fe-4S] cluster serves as cofactor.

It carries out the reaction isopentenyl diphosphate + 2 oxidized [2Fe-2S]-[ferredoxin] + H2O = (2E)-4-hydroxy-3-methylbut-2-enyl diphosphate + 2 reduced [2Fe-2S]-[ferredoxin] + 2 H(+). The enzyme catalyses dimethylallyl diphosphate + 2 oxidized [2Fe-2S]-[ferredoxin] + H2O = (2E)-4-hydroxy-3-methylbut-2-enyl diphosphate + 2 reduced [2Fe-2S]-[ferredoxin] + 2 H(+). It participates in isoprenoid biosynthesis; dimethylallyl diphosphate biosynthesis; dimethylallyl diphosphate from (2E)-4-hydroxy-3-methylbutenyl diphosphate: step 1/1. It functions in the pathway isoprenoid biosynthesis; isopentenyl diphosphate biosynthesis via DXP pathway; isopentenyl diphosphate from 1-deoxy-D-xylulose 5-phosphate: step 6/6. Its function is as follows. Catalyzes the conversion of 1-hydroxy-2-methyl-2-(E)-butenyl 4-diphosphate (HMBPP) into a mixture of isopentenyl diphosphate (IPP) and dimethylallyl diphosphate (DMAPP). Acts in the terminal step of the DOXP/MEP pathway for isoprenoid precursor biosynthesis. This is 4-hydroxy-3-methylbut-2-enyl diphosphate reductase from Leifsonia xyli subsp. xyli (strain CTCB07).